The following is a 156-amino-acid chain: 6,7-dimethyl-8-ribityllumazine synthase (156 aa).

Residues F23, 57 to 59 (AYE), and 81 to 83 (AII) each bind 5-amino-6-(D-ribitylamino)uracil. Residue 86 to 87 (GT) coordinates (2S)-2-hydroxy-3-oxobutyl phosphate. Catalysis depends on H89, which acts as the Proton donor. F114 serves as a coordination point for 5-amino-6-(D-ribitylamino)uracil. R128 provides a ligand contact to (2S)-2-hydroxy-3-oxobutyl phosphate.

This sequence belongs to the DMRL synthase family.

It catalyses the reaction (2S)-2-hydroxy-3-oxobutyl phosphate + 5-amino-6-(D-ribitylamino)uracil = 6,7-dimethyl-8-(1-D-ribityl)lumazine + phosphate + 2 H2O + H(+). The protein operates within cofactor biosynthesis; riboflavin biosynthesis; riboflavin from 2-hydroxy-3-oxobutyl phosphate and 5-amino-6-(D-ribitylamino)uracil: step 1/2. In terms of biological role, catalyzes the formation of 6,7-dimethyl-8-ribityllumazine by condensation of 5-amino-6-(D-ribitylamino)uracil with 3,4-dihydroxy-2-butanone 4-phosphate. This is the penultimate step in the biosynthesis of riboflavin. The polypeptide is 6,7-dimethyl-8-ribityllumazine synthase (Helicobacter acinonychis (strain Sheeba)).